Consider the following 515-residue polypeptide: Galactose-1-phosphate uridylyltransferase (515 aa).

The protein belongs to the galactose-1-phosphate uridylyltransferase type 2 family.

The protein resides in the cytoplasm. It carries out the reaction alpha-D-galactose 1-phosphate + UDP-alpha-D-glucose = alpha-D-glucose 1-phosphate + UDP-alpha-D-galactose. The protein operates within carbohydrate metabolism; galactose metabolism. Functionally, transfers the UMP unit from UDP-glucose (UDP-Glc) to Gal1P. Can also transfer the UMP unit to GlcNAc1P and GalNAc1P. Involved in the general galactose metabolism, and also involved in the lacto-N-biose I/galacto-N-biose (LNB/GNB) degradation pathway, which is important for host intestinal colonization by bifidobacteria. In Bifidobacterium longum subsp. longum (strain ATCC 15707 / DSM 20219 / JCM 1217 / NCTC 11818 / E194b), this protein is Galactose-1-phosphate uridylyltransferase.